A 441-amino-acid chain; its full sequence is Glutamate--tRNA ligase 1 (441 aa).

A 'HIGH' region motif is present at residues 9 to 19 (PSPTGFIHVGN). The 'KMSKS' region signature appears at 239–243 (ALSKR). Position 242 (Lys-242) interacts with ATP.

Belongs to the class-I aminoacyl-tRNA synthetase family. Glutamate--tRNA ligase type 1 subfamily. As to quaternary structure, monomer.

The protein resides in the cytoplasm. The catalysed reaction is tRNA(Glu) + L-glutamate + ATP = L-glutamyl-tRNA(Glu) + AMP + diphosphate. In terms of biological role, catalyzes the attachment of glutamate to tRNA(Glu) in a two-step reaction: glutamate is first activated by ATP to form Glu-AMP and then transferred to the acceptor end of tRNA(Glu). This Cereibacter sphaeroides (strain ATCC 17025 / ATH 2.4.3) (Rhodobacter sphaeroides) protein is Glutamate--tRNA ligase 1.